Consider the following 553-residue polypeptide: Zinc finger CCHC domain-containing protein 8 homolog (553 aa).

Residue Ser59 is modified to Phosphoserine. A CCHC-type zinc finger spans residues 183–200 (SSCFNCGDTEHSLRDCTK). Phosphoserine occurs at positions 292 and 347. Position 356 is a phosphotyrosine (Tyr356). Residues 388–492 (LEEETEDPPL…APSTPFKASY (105 aa)) form a disordered region. The span at 395–409 (PPLPPSVPPPQPPPP) shows a compositional bias: pro residues. Phosphoserine is present on residues Ser421 and Ser423. 2 stretches are compositionally biased toward polar residues: residues 444–456 (ASHN…SKSP) and 473–485 (ESGN…SAPS).

The protein belongs to the ZCCHC8 family.

It is found in the nucleus. The protein resides in the nucleoplasm. Its function is as follows. Scaffolding subunit of the trimeric nuclear exosome targeting (NEXT) complex, a complex that directs a subset of non-coding short-lived RNAs for exosomal degradation. The RNA exosome is fundamental for the degradation of RNA in eukaryotic nuclei. May be involved in pre-mRNA splicing. The protein is Zinc finger CCHC domain-containing protein 8 homolog of Drosophila melanogaster (Fruit fly).